The sequence spans 253 residues: MNILVTNDDGIMAPGINILAQKLAEKHSVLVVAPDVERSATGHAITIRTPLWAKEVKVGEKTVGYAINGTPADCVKLGILAIADFEIELVVSGINKGPNLGTDILYSGTVSGALEGAVMEKPSIAISAADWNNPKYETAAEFLLEFLDTYDVTKMPEFTALNINVPSVDRAELKGWKVTRQSRRRYRDYFEKRKDPYGNNYYWMFGEIIEDDPGEDSDYAAVRRNYVSITPIYAFMTNQNYMPKLKEELEGGN.

Positions 8, 9, 39, and 95 each coordinate a divalent metal cation.

Belongs to the SurE nucleotidase family. Requires a divalent metal cation as cofactor.

It is found in the cytoplasm. It carries out the reaction a ribonucleoside 5'-phosphate + H2O = a ribonucleoside + phosphate. Functionally, nucleotidase that shows phosphatase activity on nucleoside 5'-monophosphates. The protein is 5'-nucleotidase SurE of Kosmotoga olearia (strain ATCC BAA-1733 / DSM 21960 / TBF 19.5.1).